Here is a 193-residue protein sequence, read N- to C-terminus: Ion-translocating oxidoreductase complex subunit A (193 aa).

Helical transmembrane passes span 5-25 (ALLLLSTALVNNVVLVKFLGL), 39-59 (LGMGLATTFVITLAAAASWML), 62-82 (WLLAPFDLGFLRILSFILVIA), 102-122 (SLGIYLPLITTNCAVLGVALL), 134-154 (VLFGFGSALGFTLVLLIFAGL), and 172-192 (AAFITISLLSLAFMGLSGLVA).

The protein belongs to the NqrDE/RnfAE family. In terms of assembly, the complex is composed of six subunits: RnfA, RnfB, RnfC, RnfD, RnfE and RnfG.

It localises to the cell inner membrane. Its function is as follows. Part of a membrane-bound complex that couples electron transfer with translocation of ions across the membrane. The protein is Ion-translocating oxidoreductase complex subunit A of Aromatoleum aromaticum (strain DSM 19018 / LMG 30748 / EbN1) (Azoarcus sp. (strain EbN1)).